The following is a 205-amino-acid chain: MTGPTTDADAAVPRRVLIAEDEALIRMDLAEMLREEGYEIVGEAGDGQEAVELAELHKPDLVIMDVKMPRRDGIDAASEIASKRIAPIVVLTAFSQRDLVERARDAGAMAYLVKPFSISDLIPAIELAVSRFREITALEGEVATLSERLETRKLVERAKGLLQTKHGMTEPDAFKWIQRAAMDRRTTMKRVAEVVLETLGTPKDT.

The region spanning 15–129 is the Response regulatory domain; that stretch reads RVLIAEDEAL…DLIPAIELAV (115 aa). Asp-65 bears the 4-aspartylphosphate mark. Positions 135–196 constitute an ANTAR domain; sequence ITALEGEVAT…TMKRVAEVVL (62 aa).

Post-translationally, phosphorylated and activated by PdtaS.

Its subcellular location is the cytoplasm. In terms of biological role, member of the two-component regulatory system PdtaR/PdtaS. This two-component system plays an essential role in mycobacterial adaptation to poor nutrient conditions. PdtaR probably acts at the level of transcriptional antitermination rather than transcriptional initiation. In addition, the PdtaR/PdtaS two-component system controls copper and nitric oxide (NO) resistance downstream of the intramembrane protease Rip1. This coupled Rip1/PdtaS/PdtaR circuit controls NO resistance and acute lung infection in mice by relieving PdtaR/PdtaS-mediated repression of isonitrile chalkophore biosynthesis. Two signals are required to fully inactivate the PdtaR/PdtaS system and mediate NO resistance: a cytoplasmic inhibitory signal through the PdtaS kinase mediated by direct sensing of NO and the production of PPE1-5', an NO-induced small RNA, to sequester PdtaR. The chain is Transcriptional regulatory protein PdtaR (pdtaR) from Mycobacterium tuberculosis (strain CDC 1551 / Oshkosh).